A 302-amino-acid polypeptide reads, in one-letter code: Zinc transporter ZIP1 (302 aa).

Residues 1–6 (MEYLLQ) lie on the Extracellular side of the membrane. The chain crosses the membrane as a helical span at residues 7–27 (VKIAALVGLLFLTLIFGFIPA). Residues 28–44 (RVKWFRDTDGTETHRTV) are Cytoplasmic-facing. Residues 45–65 (LSLISCFAGGVFLSACFLDII) form a helical membrane-spanning segment. Residues 66 to 80 (PDYLSDINTELHARQ) are Extracellular-facing. A helical membrane pass occupies residues 81 to 101 (LETSFPLPEFIMAAGFFTVLI). Residues 102-158 (LERIVLNCKEMRATHEERTTLIPERKSGHGHGHGDGPDPESSGHHVHVDFQAHSPFR) lie on the Cytoplasmic side of the membrane. Positions 123 to 145 (IPERKSGHGHGHGDGPDPESSGH) are disordered. The helical transmembrane segment at 159 to 179 (SFMLFLSLSLHSIFEGLAIGL) threads the bilayer. Over 180–185 (QTTDPK) the chain is Extracellular. Residues 186–206 (VVEICIAILVHKSIIVFSLAV) traverse the membrane as a helical segment. At 207-216 (KLVQSAIPPL) the chain is on the cytoplasmic side. Residues 217–237 (WVAAYIGVFALMSPVGIAIGI) form a helical membrane-spanning segment. At 238-251 (SVMEAQLAAGPLIQ) the chain is on the extracellular side. The chain crosses the membrane as a helical span at residues 252–272 (AILEGFAAGTFVYITFLEILP). Residues 273–281 (HELNSPGKQ) are Cytoplasmic-facing. Residues 282 to 302 (LLKVLFLLLGFSIMAALSFLG) form a helical membrane-spanning segment.

This sequence belongs to the ZIP transporter (TC 2.A.5) family. As to expression, highest levels in ovary, lower levels in intestine and gill, barely detected in kidney.

Its subcellular location is the cell membrane. It is found in the endoplasmic reticulum membrane. It catalyses the reaction Zn(2+)(in) = Zn(2+)(out). In terms of biological role, transporter for the divalent cation Zn(2+). Mediates the influx of Zn(2+) into cells from extracellular space. The chain is Zinc transporter ZIP1 (slc39a1) from Takifugu rubripes (Japanese pufferfish).